The sequence spans 370 residues: GDSL esterase/lipase At1g09390 (370 aa).

Positions 1–27 (MATLSLHSHSFLLVLLPFILILRQNLA) are cleaved as a signal peptide. Serine 44 (nucleophile) is an active-site residue. Asparagine 90 and asparagine 315 each carry an N-linked (GlcNAc...) asparagine glycan. Residues aspartate 336 and histidine 339 contribute to the active site.

It belongs to the 'GDSL' lipolytic enzyme family.

The protein resides in the secreted. In Arabidopsis thaliana (Mouse-ear cress), this protein is GDSL esterase/lipase At1g09390.